The chain runs to 212 residues: Transmembrane protein 186 (212 aa).

Topologically, residues 1–78 (MAAVLRAVAR…YLSRLKVAQT (78 aa)) are mitochondrial matrix. Residues 79–99 (ALTVAALPPGLYCYSQGLMPF) form a helical membrane-spanning segment. Over 100 to 101 (SS) the chain is Mitochondrial intermembrane. Residues 102-122 (LCLAGGVAGFALAMLCWMSHF) form a helical membrane-spanning segment. Topologically, residues 123–212 (FRRLVGILYV…QVFGVLDALK (90 aa)) are mitochondrial matrix.

It belongs to the TMEM186 family. Part of the mitochondrial complex I assembly/MCIA complex that comprises at least the core subunits TMEM126B, NDUFAF1, ECSIT and ACAD9 and complement subunits such as COA1 and TMEM186. Interacts with MT-ND3.

It is found in the mitochondrion inner membrane. As part of the MCIA complex, required for efficient assembly of the mitochondrial complex I. This is Transmembrane protein 186 from Bos taurus (Bovine).